A 76-amino-acid chain; its full sequence is Defensin-like protein 122 (76 aa).

The signal sequence occupies residues 1 to 25 (MSKTTVIAIFMVVLVLGLVTKETQG). Intrachain disulfides connect Cys-29–Cys-74, Cys-39–Cys-60, Cys-44–Cys-68, and Cys-48–Cys-70.

Belongs to the DEFL family. In terms of tissue distribution, expressed in flower buds, but not in stems, roots or rosette leaves.

Its subcellular location is the secreted. The protein is Defensin-like protein 122 (LCR30) of Arabidopsis thaliana (Mouse-ear cress).